Here is a 673-residue protein sequence, read N- to C-terminus: UvrABC system protein B (673 aa).

In terms of domain architecture, Helicase ATP-binding spans 26 to 414 (EGLEDGLAHQ…GDEVVDQVVR (389 aa)). 39–46 (GVTGSGKT) is an ATP binding site. The short motif at 92–115 (YYDYYQPEAYVPSSDTFIEKDASI) is the Beta-hairpin element. The Helicase C-terminal domain occupies 431–597 (QVDDLLSEIR…GLNKKVVDIL (167 aa)). The 36-residue stretch at 633–668 (QQKIHELEGQMMQHAQNLEFEEAAQIRDQLHQLREL) folds into the UVR domain.

The protein belongs to the UvrB family. In terms of assembly, forms a heterotetramer with UvrA during the search for lesions. Interacts with UvrC in an incision complex.

The protein resides in the cytoplasm. The UvrABC repair system catalyzes the recognition and processing of DNA lesions. A damage recognition complex composed of 2 UvrA and 2 UvrB subunits scans DNA for abnormalities. Upon binding of the UvrA(2)B(2) complex to a putative damaged site, the DNA wraps around one UvrB monomer. DNA wrap is dependent on ATP binding by UvrB and probably causes local melting of the DNA helix, facilitating insertion of UvrB beta-hairpin between the DNA strands. Then UvrB probes one DNA strand for the presence of a lesion. If a lesion is found the UvrA subunits dissociate and the UvrB-DNA preincision complex is formed. This complex is subsequently bound by UvrC and the second UvrB is released. If no lesion is found, the DNA wraps around the other UvrB subunit that will check the other stand for damage. This Salmonella paratyphi A (strain ATCC 9150 / SARB42) protein is UvrABC system protein B.